Consider the following 135-residue polypeptide: Small ribosomal subunit protein uS11 (135 aa).

It belongs to the universal ribosomal protein uS11 family. In terms of assembly, part of the 30S ribosomal subunit. Interacts with proteins S7 and S18. Binds to IF-3.

Located on the platform of the 30S subunit, it bridges several disparate RNA helices of the 16S rRNA. Forms part of the Shine-Dalgarno cleft in the 70S ribosome. The sequence is that of Small ribosomal subunit protein uS11 from Polynucleobacter necessarius subsp. necessarius (strain STIR1).